The sequence spans 219 residues: U-scoloptoxin(11)-Sm7a (219 aa).

Positions 1 to 15 (MYLFLMINYFVLANS) are cleaved as a signal peptide.

Belongs to the scoloptoxin-11 family. Contains 8 disulfide bonds. As to expression, expressed by the venom gland.

The protein localises to the secreted. The sequence is that of U-scoloptoxin(11)-Sm7a from Scolopendra morsitans (Tanzanian blue ringleg centipede).